Reading from the N-terminus, the 231-residue chain is DNA mismatch repair protein MutH (231 aa).

The protein belongs to the MutH family.

Its subcellular location is the cytoplasm. Its function is as follows. Sequence-specific endonuclease that cleaves unmethylated GATC sequences. It is involved in DNA mismatch repair. The polypeptide is DNA mismatch repair protein MutH (Klebsiella pneumoniae subsp. pneumoniae (strain ATCC 700721 / MGH 78578)).